A 140-amino-acid chain; its full sequence is uncharacterized protein (140 aa).

This is an uncharacterized protein from Spirochaeta aurantia.